Consider the following 457-residue polypeptide: Phenylalanine-4-hydroxylase (457 aa).

The ACT domain occupies threonine 31–asparagine 108. Residues histidine 285, histidine 290, and glutamate 330 each contribute to the Fe cation site.

This sequence belongs to the biopterin-dependent aromatic amino acid hydroxylase family. As to quaternary structure, homotetramer. It depends on Fe(2+) as a cofactor. As to expression, expressed in the seam cells of the lateral hypodermis, in the ventral hypodermis and in the hyp7 hypodermal syncytium, in hypodermal cells in the tail and in body wall muscle cells (at protein level).

The protein resides in the cytoplasm. It carries out the reaction (6R)-L-erythro-5,6,7,8-tetrahydrobiopterin + L-phenylalanine + O2 = (4aS,6R)-4a-hydroxy-L-erythro-5,6,7,8-tetrahydrobiopterin + L-tyrosine. It catalyses the reaction (6R)-L-erythro-5,6,7,8-tetrahydrobiopterin + L-tryptophan + O2 = 5-hydroxy-L-tryptophan + (4aS,6R)-4a-hydroxy-L-erythro-5,6,7,8-tetrahydrobiopterin. Its pathway is amino-acid degradation; L-phenylalanine degradation; acetoacetate and fumarate from L-phenylalanine: step 1/6. Inhibited by tetrahydrobiopterin. Unlike its mammalian orthologs, pah-1 does not exhibit allosteric binding behavior for phenylalanine. In terms of biological role, catalyzes the hydroxylation of L-phenylalanine to L-tyrosine. Catalyzes the hydroxylation of tryptophan to 5-hydroxy-L-tryptophan. Plays a role in the biosynthesis of a melanin-like cuticle pigment. In Caenorhabditis elegans, this protein is Phenylalanine-4-hydroxylase.